The primary structure comprises 396 residues: Acetate kinase (396 aa).

Residue Asn8 participates in Mg(2+) binding. Lys15 serves as a coordination point for ATP. Arg89 provides a ligand contact to substrate. Asp146 (proton donor/acceptor) is an active-site residue. Residues 206-210 (HIGNG), 283-285 (DMR), and 331-335 (GVGEN) contribute to the ATP site. Glu383 contributes to the Mg(2+) binding site.

This sequence belongs to the acetokinase family. As to quaternary structure, homodimer. Mg(2+) is required as a cofactor. It depends on Mn(2+) as a cofactor.

It localises to the cytoplasm. The enzyme catalyses acetate + ATP = acetyl phosphate + ADP. Its pathway is metabolic intermediate biosynthesis; acetyl-CoA biosynthesis; acetyl-CoA from acetate: step 1/2. Catalyzes the formation of acetyl phosphate from acetate and ATP. Can also catalyze the reverse reaction. This Streptococcus pneumoniae (strain ATCC 700669 / Spain 23F-1) protein is Acetate kinase.